A 226-amino-acid polypeptide reads, in one-letter code: Ribonuclease 3 (226 aa).

An RNase III domain is found at 7–129 (LPRLCRTLGY…IIGAIYLDSD (123 aa)). Glu-42 lines the Mg(2+) pocket. Asp-46 is a catalytic residue. Mg(2+) contacts are provided by Asp-115 and Glu-118. The active site involves Glu-118. One can recognise a DRBM domain in the interval 156–226 (DAKTLLQEYL…AAQVLELLKK (71 aa)).

The protein belongs to the ribonuclease III family. Homodimer. The cofactor is Mg(2+).

It is found in the cytoplasm. It carries out the reaction Endonucleolytic cleavage to 5'-phosphomonoester.. In terms of biological role, digests double-stranded RNA. Involved in the processing of primary rRNA transcript to yield the immediate precursors to the large and small rRNAs (23S and 16S). Processes some mRNAs, and tRNAs when they are encoded in the rRNA operon. Processes pre-crRNA and tracrRNA of type II CRISPR loci if present in the organism. The polypeptide is Ribonuclease 3 (Shewanella oneidensis (strain ATCC 700550 / JCM 31522 / CIP 106686 / LMG 19005 / NCIMB 14063 / MR-1)).